The primary structure comprises 478 residues: Cytochrome c-552 (478 aa).

An N-terminal signal peptide occupies residues 1–26 (MARKTLRARRFFSLIFPFFFITSVYA). His94 contacts heme c. Cys122, Cys125, and Lys126 together coordinate heme. Cys160, Cys163, His164, Cys209, Cys212, and His213 together coordinate heme c. The Ca(2+) site is built by Glu215, Tyr216, Lys261, and Gln263. Substrate is bound at residue Tyr216. His264 contacts substrate. Residues His275, Cys282, Cys285, His286, His301, Cys314, Cys317, His318, and His393 each coordinate heme c.

The protein belongs to the cytochrome c-552 family. Requires Ca(2+) as cofactor. The cofactor is heme c.

The protein resides in the periplasm. The catalysed reaction is 6 Fe(III)-[cytochrome c] + NH4(+) + 2 H2O = 6 Fe(II)-[cytochrome c] + nitrite + 8 H(+). It functions in the pathway nitrogen metabolism; nitrate reduction (assimilation). Its function is as follows. Catalyzes the reduction of nitrite to ammonia, consuming six electrons in the process. The protein is Cytochrome c-552 of Salmonella schwarzengrund (strain CVM19633).